Consider the following 254-residue polypeptide: Type III pantothenate kinase (254 aa).

An ATP-binding site is contributed by 6-13 (DVGNTNIV). Substrate is bound by residues phenylalanine 100 and 107 to 110 (GADR). Aspartate 109 serves as the catalytic Proton acceptor. Aspartate 129 is a binding site for K(+). Position 132 (threonine 132) interacts with ATP. Position 184 (threonine 184) interacts with substrate.

Belongs to the type III pantothenate kinase family. As to quaternary structure, homodimer. NH4(+) is required as a cofactor. Requires K(+) as cofactor.

It is found in the cytoplasm. It carries out the reaction (R)-pantothenate + ATP = (R)-4'-phosphopantothenate + ADP + H(+). Its pathway is cofactor biosynthesis; coenzyme A biosynthesis; CoA from (R)-pantothenate: step 1/5. Catalyzes the phosphorylation of pantothenate (Pan), the first step in CoA biosynthesis. The protein is Type III pantothenate kinase of Moorella thermoacetica (strain ATCC 39073 / JCM 9320).